A 262-amino-acid polypeptide reads, in one-letter code: Eukaryotic translation initiation factor 3 subunit G (262 aa).

Residues 182–260 form the RRM domain; the sequence is NTCRVTNLPQ…MVLKVEWTRP (79 aa).

The protein belongs to the eIF-3 subunit G family. As to quaternary structure, component of the eukaryotic translation initiation factor 3 (eIF-3) complex.

The protein localises to the cytoplasm. Its function is as follows. RNA-binding component of the eukaryotic translation initiation factor 3 (eIF-3) complex, which is involved in protein synthesis of a specialized repertoire of mRNAs and, together with other initiation factors, stimulates binding of mRNA and methionyl-tRNAi to the 40S ribosome. The eIF-3 complex specifically targets and initiates translation of a subset of mRNAs involved in cell proliferation. This subunit can bind 18S rRNA. Binds to GC-rich 5'UTRs in cholinergic motor neurons, thereby may play a role in translational regulation of mRNAs involved in neuropeptide signaling and stress response, including hlh-30 isoform d and ncs-2. The chain is Eukaryotic translation initiation factor 3 subunit G from Caenorhabditis elegans.